The chain runs to 146 residues: Putative pre-16S rRNA nuclease (146 aa).

It belongs to the YqgF nuclease family.

It is found in the cytoplasm. Functionally, could be a nuclease involved in processing of the 5'-end of pre-16S rRNA. In Paraburkholderia phytofirmans (strain DSM 17436 / LMG 22146 / PsJN) (Burkholderia phytofirmans), this protein is Putative pre-16S rRNA nuclease.